The following is a 500-amino-acid chain: MSLIDTRIPEPKRFISGATGDWEVVIGMEVHAQVTSESKLFSGASTSFGAEPNSNVSLVDAAMPGMLPVINLECVKQAVRTGIGLNAQINLKSVFDRKNYFYPDLPQGYQISQFKQPIVGEGKIMISVGPDNKGQFEDVEIGIERLHLEQDAGKSMHDQHPTMSYVDLNRSGVALMEIVSKPDLRSSDEARAYLTKLRTIVRYLGTCDGNMDEGSMRADVNVSVRRPGGEFGTRCEIKNVNSIRFVGQAIEYEARRQIAILEDGGSIDQETRLFDPVKGETRSMRSKEEAHDYRYFPDPDLLPLEFDQAFVDALAVDLPELPDVKKQRLVEKQGISIYDASILVTEKAIADYYESVAAGRDGKAAANWVINDLLGALNKAGKDIEESPVSPEQLGAVIDLIKEGTISGKIAKDLFEIVWNEGGDPKKLVEERGMKQVTDTGAIEKAVDDVIAANPEKVEQAKAKPTLAGWFVGQVMKATGGKANPQSVNELVKAKLGIEE.

It belongs to the GatB/GatE family. GatB subfamily. In terms of assembly, heterotrimer of A, B and C subunits.

It carries out the reaction L-glutamyl-tRNA(Gln) + L-glutamine + ATP + H2O = L-glutaminyl-tRNA(Gln) + L-glutamate + ADP + phosphate + H(+). The catalysed reaction is L-aspartyl-tRNA(Asn) + L-glutamine + ATP + H2O = L-asparaginyl-tRNA(Asn) + L-glutamate + ADP + phosphate + 2 H(+). Allows the formation of correctly charged Asn-tRNA(Asn) or Gln-tRNA(Gln) through the transamidation of misacylated Asp-tRNA(Asn) or Glu-tRNA(Gln) in organisms which lack either or both of asparaginyl-tRNA or glutaminyl-tRNA synthetases. The reaction takes place in the presence of glutamine and ATP through an activated phospho-Asp-tRNA(Asn) or phospho-Glu-tRNA(Gln). The protein is Aspartyl/glutamyl-tRNA(Asn/Gln) amidotransferase subunit B of Brucella anthropi (strain ATCC 49188 / DSM 6882 / CCUG 24695 / JCM 21032 / LMG 3331 / NBRC 15819 / NCTC 12168 / Alc 37) (Ochrobactrum anthropi).